We begin with the raw amino-acid sequence, 227 residues long: Ribonuclease HII (227 aa).

The region spanning 16–205 (SLLAGVDEVG…VKMALDAVGV (190 aa)) is the RNase H type-2 domain. A divalent metal cation contacts are provided by Asp22, Glu23, and Asp114.

The protein belongs to the RNase HII family. Mn(2+) is required as a cofactor. Mg(2+) serves as cofactor.

The protein resides in the cytoplasm. It carries out the reaction Endonucleolytic cleavage to 5'-phosphomonoester.. Endonuclease that specifically degrades the RNA of RNA-DNA hybrids. In Marinobacter nauticus (strain ATCC 700491 / DSM 11845 / VT8) (Marinobacter aquaeolei), this protein is Ribonuclease HII.